An 89-amino-acid polypeptide reads, in one-letter code: Small ribosomal subunit protein bS20 (89 aa).

This sequence belongs to the bacterial ribosomal protein bS20 family.

Its function is as follows. Binds directly to 16S ribosomal RNA. The polypeptide is Small ribosomal subunit protein bS20 (Wolbachia sp. subsp. Brugia malayi (strain TRS)).